The following is a 384-amino-acid chain: MTHASSGATFTLACELISRSSVTPDDCGCLDLIAARLAPLGFRFERVDSSGVCNLWARRGGTAPVLCFAGHTDVVPAGPLDGWDSPPFEPTVRGGQLFGRGAADMKTSIAAFVTAIERFVATHPDHVGSIALLLTSDEEGIATHGTVKVVEALAGRGERLDYCVVGEPTSVNTLGDTIKNGRRGSLSGTLRVKGVQGHVAYPQLARNPIHEFAPALAELASIRWDEGNEFFPPTTWQVSNIHAGTGANNVIPGTCEVLFNFRFASVSSADELRQRTHVVLDRHGLDYELDWHLSGKPFLTGRGKLVEALSDAIRDTVGVETELSTSGGTSDGRFIADICNEVVEFGPVNATIHKVNESVALDAIEPLSAIYERTLNALLLPNGD.

Residue His-71 coordinates Zn(2+). Asp-73 is an active-site residue. Position 104 (Asp-104) interacts with Zn(2+). Glu-138 acts as the Proton acceptor in catalysis. Positions 139, 167, and 353 each coordinate Zn(2+).

It belongs to the peptidase M20A family. DapE subfamily. In terms of assembly, homodimer. Zn(2+) serves as cofactor. The cofactor is Co(2+).

It carries out the reaction N-succinyl-(2S,6S)-2,6-diaminopimelate + H2O = (2S,6S)-2,6-diaminopimelate + succinate. It participates in amino-acid biosynthesis; L-lysine biosynthesis via DAP pathway; LL-2,6-diaminopimelate from (S)-tetrahydrodipicolinate (succinylase route): step 3/3. Functionally, catalyzes the hydrolysis of N-succinyl-L,L-diaminopimelic acid (SDAP), forming succinate and LL-2,6-diaminopimelate (DAP), an intermediate involved in the bacterial biosynthesis of lysine and meso-diaminopimelic acid, an essential component of bacterial cell walls. This chain is Succinyl-diaminopimelate desuccinylase, found in Aromatoleum aromaticum (strain DSM 19018 / LMG 30748 / EbN1) (Azoarcus sp. (strain EbN1)).